A 363-amino-acid chain; its full sequence is Molybdenum import ATP-binding protein ModC (363 aa).

Residues methionine 1–tyrosine 232 form the ABC transporter domain. Glycine 30 to threonine 37 provides a ligand contact to ATP. In terms of domain architecture, Mop spans arginine 292 to aspartate 358.

This sequence belongs to the ABC transporter superfamily. Molybdate importer (TC 3.A.1.8) family. As to quaternary structure, the complex is composed of two ATP-binding proteins (ModC), two transmembrane proteins (ModB) and a solute-binding protein (ModA).

Its subcellular location is the cell inner membrane. It carries out the reaction molybdate(out) + ATP + H2O = molybdate(in) + ADP + phosphate + H(+). Functionally, part of the ABC transporter complex ModABC involved in molybdenum import. Responsible for energy coupling to the transport system. The sequence is that of Molybdenum import ATP-binding protein ModC from Paramagnetospirillum magneticum (strain ATCC 700264 / AMB-1) (Magnetospirillum magneticum).